A 485-amino-acid chain; its full sequence is Glycogen synthase (485 aa).

Lysine 18 contributes to the ADP-alpha-D-glucose binding site.

The protein belongs to the glycosyltransferase 1 family. Bacterial/plant glycogen synthase subfamily.

The catalysed reaction is [(1-&gt;4)-alpha-D-glucosyl](n) + ADP-alpha-D-glucose = [(1-&gt;4)-alpha-D-glucosyl](n+1) + ADP + H(+). The protein operates within glycan biosynthesis; glycogen biosynthesis. Functionally, synthesizes alpha-1,4-glucan chains using ADP-glucose. In Dechloromonas aromatica (strain RCB), this protein is Glycogen synthase.